A 25-amino-acid polypeptide reads, in one-letter code: Unknown protein 7 (25 aa).

Positions 1–25 (MENGKVHVASMSGLSMPHMNEMLEK) are disordered.

The protein is Unknown protein 7 of Pseudotsuga menziesii (Douglas-fir).